Consider the following 150-residue polypeptide: UPF0178 protein Ssed_1350 (150 aa).

This sequence belongs to the UPF0178 family.

The sequence is that of UPF0178 protein Ssed_1350 from Shewanella sediminis (strain HAW-EB3).